The following is a 1534-amino-acid chain: DNA-directed RNA polymerase subunit beta'' (1534 aa).

Residues Cys220, Cys296, Cys303, and Cys306 each coordinate Zn(2+). Basic and acidic residues-rich tracts occupy residues 644-668 and 678-688; these read RTQEEEYRTREEEYRTREEEYRTRE and PENKYRTREGE. 2 disordered regions span residues 644 to 698 and 719 to 800; these read RTQE…EDEY and YRTL…KKEG. Composition is skewed to acidic residues over residues 744-762 and 770-789; these read GEYEILEEDSEEEYGSSED and TLEEDSEEDSEEDSEDEYGS.

This sequence belongs to the RNA polymerase beta' chain family. RpoC2 subfamily. In plastids the minimal PEP RNA polymerase catalytic core is composed of four subunits: alpha, beta, beta', and beta''. When a (nuclear-encoded) sigma factor is associated with the core the holoenzyme is formed, which can initiate transcription. Requires Zn(2+) as cofactor.

Its subcellular location is the plastid. It is found in the chloroplast. It catalyses the reaction RNA(n) + a ribonucleoside 5'-triphosphate = RNA(n+1) + diphosphate. Functionally, DNA-dependent RNA polymerase catalyzes the transcription of DNA into RNA using the four ribonucleoside triphosphates as substrates. The polypeptide is DNA-directed RNA polymerase subunit beta'' (Saccharum officinarum (Sugarcane)).